The primary structure comprises 475 residues: Na(+)/H(+) antiporter NhaA 2 (475 aa).

12 helical membrane-spanning segments follow: residues 44-64 (AQATASVFLLVATITALWWAN), 92-112 (LKHIINDGLMVIFFFFIGLEI), 130-150 (LILCALGGMICPAVIYSLFNW), 156-176 (IGWGIPMATDTAFALGALTLV), 186-206 (AFLVGLAIVDDVGAIVVIALF), 211-231 (ISVIFLSISFSLIAFLAIANY), 232-252 (AGVLRPIFYILIGIAAWWTML), 255-275 (GVHPTFAGVAIALTVPARPML), 331-351 (ALDLPVSLFVLPLFALVNAGV), 368-388 (LGIVIGLVIGKFVGISGACWL), 406-426 (VIGMSLIAGIGFTMSTFIATL), and 442-462 (ILFASLLSAILGLLYLRIIAA).

Belongs to the NhaA Na(+)/H(+) (TC 2.A.33) antiporter family.

Its subcellular location is the cell inner membrane. The catalysed reaction is Na(+)(in) + 2 H(+)(out) = Na(+)(out) + 2 H(+)(in). Its function is as follows. Na(+)/H(+) antiporter that extrudes sodium in exchange for external protons. This Psychromonas ingrahamii (strain DSM 17664 / CCUG 51855 / 37) protein is Na(+)/H(+) antiporter NhaA 2.